The chain runs to 620 residues: Chaperone protein HscA homolog (620 aa).

The protein belongs to the heat shock protein 70 family.

Functionally, chaperone involved in the maturation of iron-sulfur cluster-containing proteins. Has a low intrinsic ATPase activity which is markedly stimulated by HscB. The sequence is that of Chaperone protein HscA homolog from Shewanella baltica (strain OS195).